The following is a 428-amino-acid chain: MPGIVLIGAQWGDEGKGKATDLIGTKVDYVARFNGGNNAGHTVVVGDESYALHLLPSGIISPTATPVIGNGVVVDPEVLLEEIEGLESRGIDCSRLLVSESAHVIAPYHRMIDKVTERFAGKKKIGTTGRGIGPAYADKINRVGIRIADLFHEDVLRDKVSNALHQKNQMLVKLYNRRAFDVEATVQELLEVGVKLKPYVANTSLILNNALDDGKTVLFEGGQATMLDIDHGTYPFVTSSNPTAGGACTGTGVGPTKIDRVIGVSKAYVTRVGEGPFPTELFDENGEWLRAQGHEYGVTTGRPRRCGWFDAVVNRYATQVNGLTDIVLTKLDVLTGLDEIPVCVAYDVNGVRYDDMPTDQSAFAAAKPIYGMMPGWSEDISQVHAFEDLPQTCQDYVKRLEELSGCRISAIGTGPQRDHIIEVHSLLD.

Residues glycine 12–lysine 18 and glycine 40–threonine 42 each bind GTP. The active-site Proton acceptor is aspartate 13. Residues aspartate 13 and glycine 40 each contribute to the Mg(2+) site. IMP-binding positions include aspartate 13–lysine 16, asparagine 38–histidine 41, threonine 128, arginine 142, glutamine 223, threonine 238, and arginine 302. Residue histidine 41 is the Proton donor of the active site. Position 298-304 (valine 298–arginine 304) interacts with substrate. GTP contacts are provided by residues arginine 304, lysine 330–aspartate 332, and glycine 412–glycine 414.

It belongs to the adenylosuccinate synthetase family. As to quaternary structure, homodimer. The cofactor is Mg(2+).

It localises to the cytoplasm. It catalyses the reaction IMP + L-aspartate + GTP = N(6)-(1,2-dicarboxyethyl)-AMP + GDP + phosphate + 2 H(+). Its pathway is purine metabolism; AMP biosynthesis via de novo pathway; AMP from IMP: step 1/2. Its function is as follows. Plays an important role in the de novo pathway of purine nucleotide biosynthesis. Catalyzes the first committed step in the biosynthesis of AMP from IMP. The protein is Adenylosuccinate synthetase of Bifidobacterium animalis subsp. lactis (strain AD011).